The following is a 217-amino-acid chain: Orotidine 5'-phosphate decarboxylase (217 aa).

Residues aspartate 14, lysine 36, aspartate 64 to threonine 73, serine 120, proline 172 to serine 182, glycine 197, and arginine 198 contribute to the substrate site. Lysine 66 functions as the Proton donor in the catalytic mechanism.

It belongs to the OMP decarboxylase family. Type 1 subfamily. As to quaternary structure, homodimer.

It catalyses the reaction orotidine 5'-phosphate + H(+) = UMP + CO2. It functions in the pathway pyrimidine metabolism; UMP biosynthesis via de novo pathway; UMP from orotate: step 2/2. Functionally, catalyzes the decarboxylation of orotidine 5'-monophosphate (OMP) to uridine 5'-monophosphate (UMP). The protein is Orotidine 5'-phosphate decarboxylase of Methanococcus maripaludis (strain C6 / ATCC BAA-1332).